Reading from the N-terminus, the 420-residue chain is Glyceraldehyde-3-phosphate dehydrogenase GAPCP2, chloroplastic (420 aa).

Residues 1-66 constitute a chloroplast transit peptide; sequence MALSSLLRSA…YNAKRVQPIK (66 aa). Residues 94 to 95, D116, and R162 each bind NAD(+); that span reads RI. D-glyceraldehyde 3-phosphate contacts are provided by residues 233-235, T264, 293-294, and R316; these read SCT and TG. The active-site Nucleophile is the C234. N398 is an NAD(+) binding site.

The protein belongs to the glyceraldehyde-3-phosphate dehydrogenase family. Homotetramer. As to expression, expressed in shoot and root vasculature, leaf veins and vascular tissue of flowers and siliques.

It is found in the plastid. The protein localises to the chloroplast stroma. It catalyses the reaction D-glyceraldehyde 3-phosphate + phosphate + NAD(+) = (2R)-3-phospho-glyceroyl phosphate + NADH + H(+). In terms of biological role, involved in plastidial glycolytic pathway and plays a specific role in glycolytic energy production in non-green plastids and chloroplasts. Essential for breakdown of starch to form sucrose for export to non-photosynthetic tissues, and to generate primary metabolites for anabolic pathways such as fatty acid and amino acid synthesis. Plays an important role in plant development by providing substrates for the phosphorylated pathway of serine biosynthesis in roots. Plays a crucial role in pollen development. Functionally redundant with GAPCP1. This chain is Glyceraldehyde-3-phosphate dehydrogenase GAPCP2, chloroplastic (GAPCP2), found in Arabidopsis thaliana (Mouse-ear cress).